The following is a 1155-amino-acid chain: Protein BREAST CANCER SUSCEPTIBILITY 2 homolog B (1155 aa).

BRCA2 repeat units lie at residues 63–97 (MPGE…ENVA), 116–150 (TAET…SDMI), 163–197 (FGVP…LEED), and 257–291 (LKVP…DPEL).

Interacts with RAD51 and DMC1. Interacts with DSS1(I) and DSS1(V). Can interact with both RAD51 and DSS1(I) or both DMC1 and DSS1(I) in a tripartite complex. Expressed in flower buds.

Functionally, involved in double-strand break repair and/or homologous recombination by mediating RAD51- and DMC1-facilitated DNA repair. Plays an essential role in both somatic and meiotic homologous recombination. Is crucial for the formation of RAD51 and DMC1 foci during male meiotic homologous recombination in prophase I. The sequence is that of Protein BREAST CANCER SUSCEPTIBILITY 2 homolog B from Arabidopsis thaliana (Mouse-ear cress).